The following is a 302-amino-acid chain: DNA-directed RNA polymerase II subunit rpb3 (302 aa).

Belongs to the archaeal Rpo3/eukaryotic RPB3 RNA polymerase subunit family. As to quaternary structure, component of the RNA polymerase II (Pol II) complex consisting of 12 subunits.

The protein resides in the nucleus. Its function is as follows. DNA-dependent RNA polymerase catalyzes the transcription of DNA into RNA using the four ribonucleoside triphosphates as substrates. Component of RNA polymerase II which synthesizes mRNA precursors and many functional non-coding RNAs. Pol II is the central component of the basal RNA polymerase II transcription machinery. It is composed of mobile elements that move relative to each other. Rpb3 is part of the core element with the central large cleft and the clamp element that moves to open and close the cleft. The chain is DNA-directed RNA polymerase II subunit rpb3 (polr2c) from Dictyostelium discoideum (Social amoeba).